We begin with the raw amino-acid sequence, 426 residues long: SrfA-induced gene K protein (426 aa).

The N-terminal stretch at 1-23 is a signal peptide; that stretch reads MKKMKILSFFILSLAIIIGIVYS. N-linked (GlcNAc...) asparagine glycosylation is found at Asn-64, Asn-136, Asn-160, and Asn-226. 2 Laminin EGF-like domains span residues 325 to 348 and 384 to 408; these read DNQC…GMVL and CNGT…GGEV. Cystine bridges form between Cys-330-Cys-339, Cys-342-Cys-358, and Cys-370-Cys-388. The N-linked (GlcNAc...) asparagine glycan is linked to Asn-385.

The protein is SrfA-induced gene K protein (sigK) of Dictyostelium discoideum (Social amoeba).